Reading from the N-terminus, the 329-residue chain is D-threo-aldose 1-dehydrogenase (329 aa).

Y58 serves as the catalytic Proton donor. A substrate-binding site is contributed by H145.

This sequence belongs to the aldo/keto reductase family.

The enzyme catalyses a D-threo-aldose + NAD(+) = a D-threo-aldono-1,5-lactone + NADH + H(+). Its activity is regulated as follows. Inhibited strongly by Hg(2+), Cd(2+) and para-chloromercuribenzoic acid (PCMB) and weakly by Zn(2+) and iodoacetamide. Also inhibited strongly by L-xylose but not D-glucose. Its function is as follows. Catalyzes the oxidation of L-fucose to L-fuconolactone in the presence of NADP(+). Also active against L-galactose and, to a much lesser degree, D-arabinose. Uses NADP(+) as a hydrogen acceptor much more efficiently than NAD(+). This is D-threo-aldose 1-dehydrogenase from Pseudomonas sp.